Here is a 303-residue protein sequence, read N- to C-terminus: Methionine import ATP-binding protein MetN (303 aa).

In terms of domain architecture, ABC transporter spans 1–222 (MLDQISLEIP…PDPKMRHFLG (222 aa)). ATP is bound at residue 19–26 (GHSGAGKS).

The protein belongs to the ABC transporter superfamily. Methionine importer (TC 3.A.1.24) family. In terms of assembly, the complex is composed of two ATP-binding proteins (MetN), two transmembrane proteins (MetI) and a solute-binding protein (MetQ).

The protein resides in the cell inner membrane. The enzyme catalyses L-methionine(out) + ATP + H2O = L-methionine(in) + ADP + phosphate + H(+). It catalyses the reaction D-methionine(out) + ATP + H2O = D-methionine(in) + ADP + phosphate + H(+). Part of the ABC transporter complex MetNIQ involved in methionine import. Responsible for energy coupling to the transport system. The protein is Methionine import ATP-binding protein MetN of Wolinella succinogenes (strain ATCC 29543 / DSM 1740 / CCUG 13145 / JCM 31913 / LMG 7466 / NCTC 11488 / FDC 602W) (Vibrio succinogenes).